A 102-amino-acid chain; its full sequence is Small integral membrane protein 29 (102 aa).

Asparagine 3 is a glycosylation site (N-linked (GlcNAc...) asparagine). The chain crosses the membrane as a helical span at residues 21-41 (VLGPFFLITLVGVVVAVVMYV).

In terms of tissue distribution, expressed in spleen, thymus, prostate, testis, uterus, small intestine, colon and peripheral blood leukocytes.

It localises to the membrane. The chain is Small integral membrane protein 29 from Homo sapiens (Human).